Consider the following 884-residue polypeptide: Translation initiation factor IF-2 (884 aa).

Residues 93 to 288 are disordered; that stretch reads VNTPEAEQAK…KGKRKPSTLQ (196 aa). Residues 99-209 show a composition bias toward basic and acidic residues; the sequence is EQAKAEEQAQ…KMAAENEGKW (111 aa). Over residues 216–229 the composition is skewed to polar residues; that stretch reads QTESADYHVTTSQH. Residues 231–246 are compositionally biased toward basic and acidic residues; sequence RAAEDENDAKVEGDRR. Residues 247-261 show a composition bias toward basic residues; that stretch reads SRTRGGKATKQKKGN. Positions 262 to 275 are enriched in basic and acidic residues; the sequence is KLSESKADREEARA. The tr-type G domain maps to 383–552; sequence HRAPVVTIMG…LLQAEVLELK (170 aa). The segment at 392–399 is G1; the sequence is GHVDHGKT. 392–399 contacts GTP; it reads GHVDHGKT. The tract at residues 417 to 421 is G2; that stretch reads GITQH. The tract at residues 438-441 is G3; sequence DTPG. Residues 438-442 and 492-495 contribute to the GTP site; these read DTPGH and NKID. Residues 492–495 are G4; sequence NKID. Positions 528–530 are G5; that stretch reads SAK.

The protein belongs to the TRAFAC class translation factor GTPase superfamily. Classic translation factor GTPase family. IF-2 subfamily.

It localises to the cytoplasm. In terms of biological role, one of the essential components for the initiation of protein synthesis. Protects formylmethionyl-tRNA from spontaneous hydrolysis and promotes its binding to the 30S ribosomal subunits. Also involved in the hydrolysis of GTP during the formation of the 70S ribosomal complex. This is Translation initiation factor IF-2 from Yersinia pestis bv. Antiqua (strain Angola).